The sequence spans 570 residues: MSEKHPGPLVVEGKLTDAERMKVDSNYLRGTIAEDLNDGLTGGFKGDNFLLIRFHGMYQQDDRDIRAERAEQKLEPRHAMLLRCRLPGGVITTKQWQAIDKFAHDNTIYGSIRLTNRQTFQFHGILKKNVKPVHQMLHSVGLDALATANDMNRNVLCTSNPYESELHAEAYEWAKKISEHLLPRTRAYAEIWLDQEKVATTDVEPILGQTYLPRKFKTTVVIPPQNDIDLHANDMNFVAIAENGKLVGFNLLVGGGLSIEHGNKKTYARTASEFGYIPLEHTLAVAEAVVTTQRDWGNRTDRKNAKTKYTLERVGVETFKAEVERRAGITFEPIRAYEFTGRGDRIGWVKGIDNKWHLTLFIENGRILDYPGRPLKTGLLEIAKIHKGEFRITANQNLIIAGVPESQKAKIEKLAREHTLMDGVKPQRENSMACVSFPTCPLAMAEAERFLPSFTDKVEAVLAKHGIPDEHIVMRVTGCPNGCGRALLAELGLVGKAPGRYNVHLGGNRSGTRIPRMYRENITEPEILDSLDELVGRWAKEREAGEGFGDFTVRAGIIRPVLDPARDFWE.

Positions 434, 440, 479, and 483 each coordinate [4Fe-4S] cluster. Residue cysteine 483 participates in siroheme binding.

Belongs to the nitrite and sulfite reductase 4Fe-4S domain family. In terms of assembly, alpha(8)-beta(8). The alpha component is a flavoprotein, the beta component is a hemoprotein. It depends on siroheme as a cofactor. [4Fe-4S] cluster serves as cofactor.

It catalyses the reaction hydrogen sulfide + 3 NADP(+) + 3 H2O = sulfite + 3 NADPH + 4 H(+). It participates in sulfur metabolism; hydrogen sulfide biosynthesis; hydrogen sulfide from sulfite (NADPH route): step 1/1. In terms of biological role, component of the sulfite reductase complex that catalyzes the 6-electron reduction of sulfite to sulfide. This is one of several activities required for the biosynthesis of L-cysteine from sulfate. The protein is Sulfite reductase [NADPH] hemoprotein beta-component of Enterobacter sp. (strain 638).